A 307-amino-acid chain; its full sequence is Solute carrier family 25 member 53 (307 aa).

The interval 1–23 is disordered; sequence MGEQNHSPGKELQHRTRAEAPGK. Positions 8-22 are enriched in basic and acidic residues; the sequence is PGKELQHRTRAEAPG. Solcar repeat units follow at residues 25–105, 112–202, and 210–302; these read SWHS…LLCF, HTLG…IQDG, and HWVP…HSRK. Transmembrane regions (helical) follow at residues 31 to 51, 82 to 102, 112 to 132, 181 to 201, 215 to 235, and 269 to 290; these read YALGAVSNFMSTFLTFPIYKV, YPPLLSKTLQGTLLFGTYDSL, HTLGHRWAAGLMSGVVEAVAL, VLARNSLGSALYFSFKDPIQD, LVSGSVNGTITCLVLYPLIVL, and IYRGGSLVILRSSVTWGLTTAI.

The protein belongs to the mitochondrial carrier (TC 2.A.29) family.

Its subcellular location is the mitochondrion inner membrane. The sequence is that of Solute carrier family 25 member 53 (SLC25A53) from Homo sapiens (Human).